The chain runs to 224 residues: MQAPGRGPLGLRLMMPGRRGALREPGGCGSCLGVALALLLLLLPACCPVRAQNDTEPIVLEGKCLVVCDSSPSADGAVTSSLGISVRSGSAKVAFSATRSTNHEPSEMSNRTMTIYFDQVLVNIGNHFDLASSIFVAPRKGIYSFSFHVVKVYNRQTIQVSLMQNGYPVISAFAGDQDVTREAASNGVLLLMEREDKVHLKLERGNLMGGWKYSTFSGFLVFPL.

Positions 1–51 (MQAPGRGPLGLRLMMPGRRGALREPGGCGSCLGVALALLLLLLPACCPVRA) are cleaved as a signal peptide. N-linked (GlcNAc...) asparagine glycans are attached at residues N53 and N110. A C1q domain is found at 88-224 (SGSAKVAFSA…TFSGFLVFPL (137 aa)).

In terms of assembly, homohexamer; disulfide-linked homotrimers. The trimers are assembled via the globular C1q domains. The trimers associate via N-terminal cysteine residues to form disulfide-linked hexamers. May form homooligomers or heterooligomers with CBLN1 and CBLN3 prior to secretion. Once secreted, does not interact with other CBLN family members. Interacts with GRID2, and more weakly with GRID1. Interacts with NRXN1 and NRXN2 long and short isoforms produced by alternative promoter usage. Weakly interacts with NRXN3 short isoform and not at all with NRXN3 long isoform.

The protein localises to the secreted. Its function is as follows. Acts as a synaptic organizer in specific subsets of neurons in the brain. Essential for long-term maintenance but not establishment of excitatory synapses. Functions as part of a trans-synaptic complex by binding to postsynaptic GRID1 and presynaptic neurexins. This interaction helps regulate the activity of NMDA and AMPA receptors at hippocampal synapses without affecting synapse formation. NRXN1B-CBLN2-GRID1 complex transduce presynaptic signals into postsynaptic NMDAR response. NRXN3B-CBLN2-GRID1 complex transduce presynaptic signals into postsynaptic AMPAR response. This chain is Cerebellin-2, found in Homo sapiens (Human).